A 1015-amino-acid chain; its full sequence is Putative ankyrin repeat protein R96 (1015 aa).

Over residues methionine 1–lysine 14 the composition is skewed to basic residues. Residues methionine 1 to lysine 37 form a disordered region. ANK repeat units follow at residues asparagine 136–phenylalanine 165, alanine 168–isoleucine 201, aspartate 202–valine 231, leucine 340–alanine 370, asparagine 374–serine 403, serine 456–alanine 485, asparagine 498–leucine 527, and threonine 535–cysteine 564.

The sequence is that of Putative ankyrin repeat protein R96 from Acanthamoeba polyphaga mimivirus (APMV).